Reading from the N-terminus, the 191-residue chain is Fe/S biogenesis protein NfuA (191 aa).

Positions 149 and 152 each coordinate [4Fe-4S] cluster.

The protein belongs to the NfuA family. As to quaternary structure, homodimer. The cofactor is [4Fe-4S] cluster.

Functionally, involved in iron-sulfur cluster biogenesis. Binds a 4Fe-4S cluster, can transfer this cluster to apoproteins, and thereby intervenes in the maturation of Fe/S proteins. Could also act as a scaffold/chaperone for damaged Fe/S proteins. The polypeptide is Fe/S biogenesis protein NfuA (Enterobacter sp. (strain 638)).